Consider the following 146-residue polypeptide: Ribonuclease H (146 aa).

One can recognise an RNase H type-1 domain in the interval 1–141; the sequence is MKKVQLITDG…CDELATRAAR (141 aa). Residues Asp9, Glu47, Asp69, and Asp133 each contribute to the Mg(2+) site.

The protein belongs to the RNase H family. In terms of assembly, monomer. Mg(2+) serves as cofactor.

The protein resides in the cytoplasm. It carries out the reaction Endonucleolytic cleavage to 5'-phosphomonoester.. Its function is as follows. Endonuclease that specifically degrades the RNA of RNA-DNA hybrids. This Solibacter usitatus (strain Ellin6076) protein is Ribonuclease H.